Consider the following 288-residue polypeptide: Large ribosomal subunit protein uL2 (288 aa).

Over residues 29–43 (PEKSLTRGFKRDKGR) the composition is skewed to basic and acidic residues. Disordered regions lie at residues 29 to 59 (PEKSLTRGFKRDKGRNNRGVITSRRRGGGHK) and 210 to 288 (GRNR…GRQS). Basic residues-rich tracts occupy residues 210-221 (GRNRWKGRRPKV) and 272-288 (VRRRKKSSKRGRGGRQS).

This sequence belongs to the universal ribosomal protein uL2 family. In terms of assembly, part of the 50S ribosomal subunit. Forms a bridge to the 30S subunit in the 70S ribosome.

In terms of biological role, one of the primary rRNA binding proteins. Required for association of the 30S and 50S subunits to form the 70S ribosome, for tRNA binding and peptide bond formation. It has been suggested to have peptidyltransferase activity; this is somewhat controversial. Makes several contacts with the 16S rRNA in the 70S ribosome. The sequence is that of Large ribosomal subunit protein uL2 from Thermosynechococcus vestitus (strain NIES-2133 / IAM M-273 / BP-1).